Reading from the N-terminus, the 297-residue chain is UDP-3-O-acyl-N-acetylglucosamine deacetylase (297 aa).

Zn(2+) is bound by residues H79, H238, and D242. Residue H265 is the Proton donor of the active site.

It belongs to the LpxC family. Zn(2+) serves as cofactor.

The enzyme catalyses a UDP-3-O-[(3R)-3-hydroxyacyl]-N-acetyl-alpha-D-glucosamine + H2O = a UDP-3-O-[(3R)-3-hydroxyacyl]-alpha-D-glucosamine + acetate. It participates in glycolipid biosynthesis; lipid IV(A) biosynthesis; lipid IV(A) from (3R)-3-hydroxytetradecanoyl-[acyl-carrier-protein] and UDP-N-acetyl-alpha-D-glucosamine: step 2/6. Its function is as follows. Catalyzes the hydrolysis of UDP-3-O-myristoyl-N-acetylglucosamine to form UDP-3-O-myristoylglucosamine and acetate, the committed step in lipid A biosynthesis. This Blochmanniella pennsylvanica (strain BPEN) protein is UDP-3-O-acyl-N-acetylglucosamine deacetylase.